Here is a 203-residue protein sequence, read N- to C-terminus: Glycerol-3-phosphate acyltransferase (203 aa).

At 1–3 (MSA) the chain is on the periplasmic side. A helical membrane pass occupies residues 4–24 (IAPGMILFAYLCGSISSAILV). Residues 25–52 (CRIAGLPDPRESGSGNPGATNVLRIGGK) lie on the Cytoplasmic side of the membrane. Residues 53–73 (GAAVAVLIFDILKGMLPVWGA) traverse the membrane as a helical segment. Topologically, residues 74 to 80 (YALGVTP) are periplasmic. A helical membrane pass occupies residues 81 to 101 (FWLGLIAIAACLGHIWPVFFG). Residues 102–111 (FKGGKGVATA) lie on the Cytoplasmic side of the membrane. The chain crosses the membrane as a helical span at residues 112-132 (FGAIAPIGWDLTGVMAGTWLL). The Periplasmic segment spans residues 133-137 (TVLLS). A helical membrane pass occupies residues 138–158 (GYSSLGAIVSALIAPFYVWWF). Over 159-203 (KPQFTFPVSMLSCLILLRHHDNIQRLWRRQETKIWTKLKKKRQKD) the chain is Cytoplasmic.

It belongs to the PlsY family. As to quaternary structure, probably interacts with PlsX.

The protein resides in the cell inner membrane. The enzyme catalyses sn-glycerol 3-phosphate + an acyl-CoA = a 1-acyl-sn-glycero-3-phosphate + CoA. The catalysed reaction is a fatty acyl-[ACP] + sn-glycerol 3-phosphate = a 1-acyl-sn-glycero-3-phosphate + holo-[ACP]. It functions in the pathway lipid metabolism; phospholipid metabolism. Its function is as follows. Catalyzes the transfer of an acyl group from acyl-ACP to glycerol-3-phosphate (G3P) to form lysophosphatidic acid (LPA). This enzyme can also utilize acyl-CoA as fatty acyl donor, but not acyl-PO(4). The polypeptide is Glycerol-3-phosphate acyltransferase (Salmonella agona (strain SL483)).